A 425-amino-acid chain; its full sequence is Aromatic prenyl transferase ptmE (425 aa).

L-tryptophan-binding positions include 83 to 84 (GI) and Glu92. Arg107, Lys198, Tyr200, Arg265, Lys267, Tyr269, Tyr345, Tyr410, and Tyr414 together coordinate substrate.

The protein belongs to the tryptophan dimethylallyltransferase family. Homodimer.

It functions in the pathway secondary metabolite biosynthesis. Aromatic prenyl transferase; part of the gene cluster that mediates the biosynthesis of the indole diterpenes penitrems. The geranylgeranyl diphosphate (GGPP) synthase ptmG catalyzes the first step in penitrem biosynthesis via conversion of farnesyl pyrophosphate and isopentyl pyrophosphate into geranylgeranyl pyrophosphate (GGPP). Condensation of indole-3-glycerol phosphate with GGPP by the prenyl transferase ptmC then forms 3-geranylgeranylindole (3-GGI). Epoxidation by the FAD-dependent monooxygenase ptmM leads to a epoxidized-GGI that is substrate of the terpene cyclase ptmB for cyclization to yield paspaline. Paspaline is subsequently converted to 13-desoxypaxilline by the cytochrome P450 monooxygenase ptmP, the latter being then converted to paxilline by the cytochrome P450 monooxygenase ptmQ. Paxilline is converted to beta-paxitriol via C-10 ketoreduction by the short-chain dehydrogenase ptmH which can be monoprenylated at the C-20 by the indole diterpene prenyltransferase ptmD. A two-step elimination (acetylation and elimination) process performed by the O-acetyltransferase ptmV and ptmI leads to the production of the prenylated form of penijanthine. The FAD-linked oxidoreductase ptmO then converts the prenylated form of penijanthine into PC-M5 which is in turn transformed into PC-M4 by the aromatic dimethylallyltransferase ptmE. Five sequential oxidative transformations performed by the cytochrome P450 monooxygenases ptmK, ptmU, ptmL, ptmN and ptmJ yield the various penitrem compounds. PtmK, ptmU and ptmM are involved in the formation of the key bicyclic ring of penitrem C via the formation of the intermediates secopenitrem D and penitrem D. PtmL catalyzes the epoxidation of penitrem D and C to yield penitrem B and F, respectively. PtmJ catalyzes the last benzylic hydroxylation to convert penitrem B to prenitrem E and penitrem F to penitrem A. This chain is Aromatic prenyl transferase ptmE, found in Penicillium ochrochloron.